The following is a 258-amino-acid chain: Ditrans,polycis-undecaprenyl-diphosphate synthase ((2E,6E)-farnesyl-diphosphate specific) (258 aa).

Asp-24 is a catalytic residue. Mg(2+) is bound at residue Asp-24. Residues 25-28 (GNGR), Trp-29, Arg-37, His-41, and 69-71 (SSE) contribute to the substrate site. The active-site Proton acceptor is the Asn-72. Residues Trp-73, Arg-75, Arg-192, and 198–200 (RIS) contribute to the substrate site. Glu-211 lines the Mg(2+) pocket.

Belongs to the UPP synthase family. In terms of assembly, homodimer. It depends on Mg(2+) as a cofactor.

It catalyses the reaction 8 isopentenyl diphosphate + (2E,6E)-farnesyl diphosphate = di-trans,octa-cis-undecaprenyl diphosphate + 8 diphosphate. Functionally, catalyzes the sequential condensation of isopentenyl diphosphate (IPP) with (2E,6E)-farnesyl diphosphate (E,E-FPP) to yield (2Z,6Z,10Z,14Z,18Z,22Z,26Z,30Z,34E,38E)-undecaprenyl diphosphate (di-trans,octa-cis-UPP). UPP is the precursor of glycosyl carrier lipid in the biosynthesis of bacterial cell wall polysaccharide components such as peptidoglycan and lipopolysaccharide. The protein is Ditrans,polycis-undecaprenyl-diphosphate synthase ((2E,6E)-farnesyl-diphosphate specific) of Xanthomonas campestris pv. campestris (strain ATCC 33913 / DSM 3586 / NCPPB 528 / LMG 568 / P 25).